Consider the following 309-residue polypeptide: Caspase-7 (309 aa).

A propeptide spans 1–24 (MSGDQHADRSSGEKSNGDQDDTVD) (N-terminally processed). The segment covering 1–31 (MSGDQHADRSSGEKSNGDQDDTVDAKPDRSS) has biased composition (basic and acidic residues). Residues 1-53 (MSGDQHADRSSGEKSNGDQDDTVDAKPDRSSRLSLFAKKKKNGEEEQPKSSLS) are disordered. An exosite region spans residues 39 to 42 (KKKN). The segment at 81 to 92 (KNFEDKTGMGTR) is loop L1. Catalysis depends on residues His-149 and Cys-191. The tract at residues 192–201 (RGSEFDEGIQ) is loop L2. A propeptide spanning residues 204-214 (SGPANDTLETD) is cleaved from the precursor. Residues 234–246 (VPGYYSWRNPGRG) are loop L3. The loop L4 stretch occupies residues 282–296 (ESQSDDPRFSEKKQI).

Belongs to the peptidase C14A family. Heterotetramer that consists of two anti-parallel arranged heterodimers, each one formed by a 20 kDa (p20) and a 11 kDa (p11) subunit. In terms of processing, cleavage by different proteases, such as granzyme B (GZMB), caspase-1 (CASP1), caspase-8 (CASP8) or caspase-9 (CASP9) generate the two active subunits. Its involvement in different programmed cell death processes is probably specified by the protease that activates CASP7. Cleaved and activated by initiator caspases (CASP8 and/or CASP9), leading to execution phase of apoptosis. Cleavage and maturation by GZMB regulates granzyme-mediated programmed cell death. Cleaved and activated by CASP1 in response to bacterial infection.

The protein resides in the cytoplasm. It localises to the cytosol. It is found in the nucleus. The protein localises to the secreted. Its subcellular location is the extracellular space. The enzyme catalyses Strict requirement for an Asp residue at position P1 and has a preferred cleavage sequence of Asp-Glu-Val-Asp-|-.. Its activity is regulated as follows. During activation, the N-terminal disordered prodomain is removed by cleavage. Concomitantly, double cleavage gives rise to a large Caspase-7 subunit p20 and a small Caspase-7 subunit p11. The two large and two small subunits then assemble to form the active CASP7 complex. Can be cleaved and activated by different caspases, depending on the context. Cleaved and activated by initiator caspases (CASP8 and/or CASP9), leading to execution phase of apoptosis. Cleavage and maturation by GZMB regulates granzyme-mediated programmed cell death. Cleavage and maturation by CASP1 regulates pyroptosis. Inhibited by BIRC6; following inhibition of BIRC6-caspase binding by DIABLO/SMAC, BIRC6 is subjected to caspase cleavage, leading to an increase in active caspases. In terms of biological role, thiol protease involved in different programmed cell death processes, such as apoptosis, pyroptosis or granzyme-mediated programmed cell death, by proteolytically cleaving target proteins. Has a marked preference for Asp-Glu-Val-Asp (DEVD) consensus sequences, with some plasticity for alternate non-canonical sequences. Its involvement in the different programmed cell death processes is probably determined by upstream proteases that activate CASP7. Acts as an effector caspase involved in the execution phase of apoptosis: following cleavage and activation by initiator caspases (CASP8 and/or CASP9), mediates execution of apoptosis by catalyzing cleavage of proteins. Compared to CASP3, acts as a minor executioner caspase and cleaves a limited set of target proteins. Acts as a key regulator of the inflammatory response in response to bacterial infection by catalyzing cleavage and activation of the sphingomyelin phosphodiesterase SMPD1 in the extracellular milieu, thereby promoting membrane repair. Cleaves BIRC6 following inhibition of BIRC6-caspase binding by DIABLO/SMAC. The chain is Caspase-7 from Gallus gallus (Chicken).